The following is a 189-amino-acid chain: MYLVVGLGNIGKEYKKTRHNIGFDVVDIIAEKYNIEINRQKFKGSYGEGRIGNEKIILLKPSTYMNLSGESVIEAANFYKIDKENIIVIYDDMSIDIGKLRVRSKGSAGGHNGIKNIIQHLNSDIFPRVRVGIGQPDENVVNYVLGKFSKDEREIIEKVLAMSAKACISIVEDGVTEAMNKYNGVKIEV.

Tyr-14 is a tRNA binding site. His-19 serves as the catalytic Proton acceptor. Residues Tyr-64, Asn-66, and Asn-112 each coordinate tRNA.

Belongs to the PTH family. In terms of assembly, monomer.

The protein resides in the cytoplasm. The enzyme catalyses an N-acyl-L-alpha-aminoacyl-tRNA + H2O = an N-acyl-L-amino acid + a tRNA + H(+). In terms of biological role, hydrolyzes ribosome-free peptidyl-tRNAs (with 1 or more amino acids incorporated), which drop off the ribosome during protein synthesis, or as a result of ribosome stalling. Catalyzes the release of premature peptidyl moieties from peptidyl-tRNA molecules trapped in stalled 50S ribosomal subunits, and thus maintains levels of free tRNAs and 50S ribosomes. In Clostridium botulinum (strain ATCC 19397 / Type A), this protein is Peptidyl-tRNA hydrolase.